The following is a 416-amino-acid chain: Tyrosine--tRNA ligase (416 aa).

Y40 contacts L-tyrosine. Positions 45–54 match the 'HIGH' region motif; it reads ATAASLHVGH. Positions 177 and 181 each coordinate L-tyrosine. Residues 237-241 carry the 'KMSKS' region motif; the sequence is KMGKS. K240 is a binding site for ATP. The S4 RNA-binding domain occupies 351–416; the sequence is LSVTHFLVAA…RKKHKLVRLA (66 aa).

This sequence belongs to the class-I aminoacyl-tRNA synthetase family. TyrS type 1 subfamily. In terms of assembly, homodimer.

The protein resides in the cytoplasm. The catalysed reaction is tRNA(Tyr) + L-tyrosine + ATP = L-tyrosyl-tRNA(Tyr) + AMP + diphosphate + H(+). Its function is as follows. Catalyzes the attachment of tyrosine to tRNA(Tyr) in a two-step reaction: tyrosine is first activated by ATP to form Tyr-AMP and then transferred to the acceptor end of tRNA(Tyr). The protein is Tyrosine--tRNA ligase of Cereibacter sphaeroides (strain ATCC 17025 / ATH 2.4.3) (Rhodobacter sphaeroides).